Here is a 403-residue protein sequence, read N- to C-terminus: Phosphoglycerate kinase (403 aa).

Substrate-binding positions include 21–23 (DFN), R36, 59–62 (HLGR), R119, and R159. ATP contacts are provided by residues K214, G301, E332, and 359–362 (GGDS).

The protein belongs to the phosphoglycerate kinase family. As to quaternary structure, monomer.

The protein resides in the cytoplasm. The catalysed reaction is (2R)-3-phosphoglycerate + ATP = (2R)-3-phospho-glyceroyl phosphate + ADP. It functions in the pathway carbohydrate degradation; glycolysis; pyruvate from D-glyceraldehyde 3-phosphate: step 2/5. The sequence is that of Phosphoglycerate kinase from Lactobacillus gasseri (strain ATCC 33323 / DSM 20243 / BCRC 14619 / CIP 102991 / JCM 1131 / KCTC 3163 / NCIMB 11718 / NCTC 13722 / AM63).